We begin with the raw amino-acid sequence, 681 residues long: Oligopeptidase A (681 aa).

Zn(2+) is bound at residue histidine 470. Glutamate 471 is a catalytic residue. Positions 474 and 477 each coordinate Zn(2+).

It belongs to the peptidase M3 family. Zn(2+) is required as a cofactor.

The catalysed reaction is Hydrolysis of oligopeptides, with broad specificity. Gly or Ala commonly occur as P1 or P1' residues, but more distant residues are also important, as is shown by the fact that Z-Gly-Pro-Gly-|-Gly-Pro-Ala is cleaved, but not Z-(Gly)(5).. May play a specific role in the degradation of signal peptides after they are released from precursor forms of secreted proteins. Can cleave N-acetyl-L-Ala(4). The chain is Oligopeptidase A (prlC) from Haemophilus influenzae (strain ATCC 51907 / DSM 11121 / KW20 / Rd).